Reading from the N-terminus, the 697-residue chain is MAMTSWPSTGRQRRHQLASMLLLVLVVVGIYVPVFALLPSLSYTPQSLPSAIPQDEKMISRKFYIKDDNFWKDGNRFQIIGGDLHYFRVLPEYWEDRLLRANALGLNTIQVYVPWNLHEPKPGKMVFEGIGDLVSFLKLCEKLDFLVMLRAGPYICGEWDLGGFPAWLLAVKPRLQLRTSDPVYLKLVERWWDVLLPKVFPLLYSNGGPVIMVQIENEYGSYGNDKAYLRKLVSMARGHLGDDIIVYTTDGGTKETLDKGTVPVADVYSAVDFSTGDDPWPIFKLQKKFNAPGRSPPLSSEFYTGWLTHWGEKITKTDAEFTAASLEKILSRNGSAVLYMVHGGTNFGFYNGANTGSEESDYKPDLTSYDYDAPIKESGDIDNPKFQALQRVIKKYNASPHPISPSNKQRKAYGSIKMQMTTSLFDLVRMTDPADVITSANPISMESVGQMFGFLLYESSYIAKKSGNTLRIPKVHDRAQVFVSCLSQDVDVGVLRYIGTTERWNNQPISLPTIECTTNTSLFILVENMGRVNYGPYIFDDKGILSSVYLDGQILHGWKMIPIPFHNLNQEPNLTFEMQHTKNRSKKFELTNDVGRKEPALFAGEFSINSEEEIKDTYLSFNGWGKGVAFVNEFNIGRYWPSVGPQCNLYVPAPLLKRGKNTLVVFELESPHLELSLEAVDHQDFTCGSNVSKVNQL.

Positions 1-35 are cleaved as a signal peptide; that stretch reads MAMTSWPSTGRQRRHQLASMLLLVLVVVGIYVPVF. Glu-218 serves as the catalytic Proton donor. Glu-301 serves as the catalytic Nucleophile. Residues Asn-333, Asn-519, Asn-573, Asn-583, and Asn-690 are each glycosylated (N-linked (GlcNAc...) asparagine).

This sequence belongs to the glycosyl hydrolase 35 family. As to expression, ubiquitous, with higher expression levels in roots and siliques.

It localises to the secreted. It is found in the extracellular space. Its subcellular location is the apoplast. The enzyme catalyses Hydrolysis of terminal non-reducing beta-D-galactose residues in beta-D-galactosides.. The chain is Beta-galactosidase 17 (BGAL17) from Arabidopsis thaliana (Mouse-ear cress).